The primary structure comprises 228 residues: Glutamate transport system permease protein GluC (228 aa).

4 helical membrane passes run 16–36 (FWVT…LGTI), 64–84 (LTLV…LTLA), 100–120 (AVLG…RSGI), and 195–215 (LFVV…PMGL). Residues 16–217 (FWVTIQLTVY…ILTLPMGLGL (202 aa)) enclose the ABC transmembrane type-1 domain.

Belongs to the binding-protein-dependent transport system permease family. HisMQ subfamily. The complex is composed of two ATP-binding proteins (GluA), two transmembrane proteins (GluC and GluD) and a solute-binding protein (GluB).

The protein localises to the cell membrane. Part of the ABC transporter complex GluABCD involved in glutamate uptake. Probably responsible for the translocation of the substrate across the membrane. This Corynebacterium efficiens (strain DSM 44549 / YS-314 / AJ 12310 / JCM 11189 / NBRC 100395) protein is Glutamate transport system permease protein GluC.